The chain runs to 378 residues: tRNA-specific 2-thiouridylase MnmA (378 aa).

ATP is bound by residues 7 to 14 and M33; that span reads GLSGGVDS. The tract at residues 102 to 104 is interaction with target base in tRNA; sequence NPD. The active-site Nucleophile is the C107. The cysteines at positions 107 and 209 are disulfide-linked. G132 is an ATP binding site. The tract at residues 159–161 is interaction with tRNA; it reads KDQ. The Cysteine persulfide intermediate role is filled by C209. The tract at residues 316-317 is interaction with tRNA; it reads RY.

Belongs to the MnmA/TRMU family.

The protein resides in the cytoplasm. It catalyses the reaction S-sulfanyl-L-cysteinyl-[protein] + uridine(34) in tRNA + AH2 + ATP = 2-thiouridine(34) in tRNA + L-cysteinyl-[protein] + A + AMP + diphosphate + H(+). Its function is as follows. Catalyzes the 2-thiolation of uridine at the wobble position (U34) of tRNA, leading to the formation of s(2)U34. The protein is tRNA-specific 2-thiouridylase MnmA of Onion yellows phytoplasma (strain OY-M).